The sequence spans 128 residues: Large ribosomal subunit protein bL19 (128 aa).

It belongs to the bacterial ribosomal protein bL19 family.

Functionally, this protein is located at the 30S-50S ribosomal subunit interface and may play a role in the structure and function of the aminoacyl-tRNA binding site. In Aromatoleum aromaticum (strain DSM 19018 / LMG 30748 / EbN1) (Azoarcus sp. (strain EbN1)), this protein is Large ribosomal subunit protein bL19.